Consider the following 242-residue polypeptide: MKKTTLIKEGKAKRLYNTDEKDLVWVEYMDQATALNGKRKDHIAGKGELNNQIDCILFEQLVAKGIHTDFVQKLSNNEQLNRKVKIIPLEVVVRNAASGSFQRKFDVSYLQAFDQPVVEFFYKSDELDDPFINTNKAIALKIIDLEESQRLEKMALEINQILKERFAKAHLQLVDFKVEFGKTADDEIVLADEISPDSCRLVDLTTKESLDKDVFRKKTGDLVTVYQEVLNRLNNSQEEVHG.

The protein belongs to the SAICAR synthetase family.

It carries out the reaction 5-amino-1-(5-phospho-D-ribosyl)imidazole-4-carboxylate + L-aspartate + ATP = (2S)-2-[5-amino-1-(5-phospho-beta-D-ribosyl)imidazole-4-carboxamido]succinate + ADP + phosphate + 2 H(+). The protein operates within purine metabolism; IMP biosynthesis via de novo pathway; 5-amino-1-(5-phospho-D-ribosyl)imidazole-4-carboxamide from 5-amino-1-(5-phospho-D-ribosyl)imidazole-4-carboxylate: step 1/2. The chain is Phosphoribosylaminoimidazole-succinocarboxamide synthase from Pediococcus pentosaceus (strain ATCC 25745 / CCUG 21536 / LMG 10740 / 183-1w).